The sequence spans 174 residues: Variant surface antigen F (174 aa).

Positions 1-29 are cleaved as a signal peptide; the sequence is MKKSIFSKKLLFSFGSLVALAAIPLITIS. A lipid anchor (N-palmitoyl cysteine) is attached at cysteine 30. The S-diacylglycerol cysteine moiety is linked to residue cysteine 30. Residues 32-174 are disordered; it reads QTNTDQSQQP…PEQGNSQVSK (143 aa). Over residues 43–53 the composition is skewed to gly residues; the sequence is SGSGSGSGTSN. 9 consecutive repeat copies span residues 55 to 67, 68 to 80, 81 to 93, 94 to 106, 107 to 119, 120 to 132, 133 to 145, 146 to 158, and 159 to 171. The segment at 55–171 is 9 X 13 AA tandem repeats; sequence SGSTPTPEQG…TPTPEQGNSQ (117 aa). The segment covering 62 to 174 has biased composition (polar residues); that stretch reads EQGNNQGGST…PEQGNSQVSK (113 aa).

The protein localises to the cell membrane. In terms of biological role, responsible for the antigenic diversity for host adaptation. Expression in E.coli of a construct containing vlpD, vlpE, and vlpF yields antigenically distinguishable products corresponding to each gene. The chain is Variant surface antigen F (vlpF) from Mesomycoplasma hyorhinis (Mycoplasma hyorhinis).